The primary structure comprises 352 residues: tRNA-specific 2-thiouridylase MnmA (352 aa).

ATP contacts are provided by residues 6 to 13 and Leu32; that span reads AMSGGVDS. The Nucleophile role is filled by Cys101. Residues Cys101 and Cys194 are joined by a disulfide bond. Residue Gly125 coordinates ATP. The interval 144–146 is interaction with tRNA; the sequence is KDQ. Cys194 functions as the Cysteine persulfide intermediate in the catalytic mechanism.

This sequence belongs to the MnmA/TRMU family.

It is found in the cytoplasm. It catalyses the reaction S-sulfanyl-L-cysteinyl-[protein] + uridine(34) in tRNA + AH2 + ATP = 2-thiouridine(34) in tRNA + L-cysteinyl-[protein] + A + AMP + diphosphate + H(+). Catalyzes the 2-thiolation of uridine at the wobble position (U34) of tRNA, leading to the formation of s(2)U34. This chain is tRNA-specific 2-thiouridylase MnmA, found in Frankia alni (strain DSM 45986 / CECT 9034 / ACN14a).